The chain runs to 375 residues: Protein HrmA (375 aa).

Functionally, unknown. May serve a regulatory function. The chain is Protein HrmA (hrmA) from Pseudomonas syringae pv. syringae.